The sequence spans 96 residues: Co-chaperonin GroES (96 aa).

It belongs to the GroES chaperonin family. Heptamer of 7 subunits arranged in a ring. Interacts with the chaperonin GroEL.

The protein resides in the cytoplasm. In terms of biological role, together with the chaperonin GroEL, plays an essential role in assisting protein folding. The GroEL-GroES system forms a nano-cage that allows encapsulation of the non-native substrate proteins and provides a physical environment optimized to promote and accelerate protein folding. GroES binds to the apical surface of the GroEL ring, thereby capping the opening of the GroEL channel. The polypeptide is Co-chaperonin GroES (Shewanella denitrificans (strain OS217 / ATCC BAA-1090 / DSM 15013)).